The sequence spans 1479 residues: WASH complex subunit 2 (1479 aa).

Residues 1 to 17 (MPEEQPQQQQQPVREQP) are compositionally biased toward low complexity. 5 disordered regions span residues 1–25 (MPEE…DVPW), 188–210 (GGLV…TEKK), 240–564 (FIED…GGVK), 576–1383 (FSGK…FDDI), and 1419–1479 (TSTT…NLFD). Positions 242-279 (EDSDSDSSDEEDEEDVDAEDGSDESSSESSSDDDDEKD) are enriched in acidic residues. Residues 334-349 (SKKSSNSYTSSLSDIL) are compositionally biased toward low complexity. Residues 422–431 (DDDLFGDSEE) are compositionally biased toward acidic residues. Low complexity-rich tracts occupy residues 465 to 475 (TTTSSQPQQKK) and 514 to 532 (TPKP…TTTK). Thr535 carries the post-translational modification Phosphothreonine. The segment covering 542–552 (ASGSESTTGKS) has biased composition (polar residues). Positions 595-620 (TESKASEDDFFSSDKKSTSATKKDAE) are enriched in basic and acidic residues. Residues 709 to 723 (PKAPTTATTTTTTKP) show a composition bias toward low complexity. The segment covering 765–781 (TETKKQPITEEPKKKQD) has biased composition (basic and acidic residues). Polar residues predominate over residues 802–814 (ASISPASPVSTIE). Residues 839 to 885 (DLTKDEPAKSEPTKVEPTKVEPTKAEPTKVEPAKVEPTKVESDKKES) show a composition bias toward basic and acidic residues. The segment covering 904 to 916 (KNPTTSSSTTATE) has biased composition (polar residues). Over residues 951–968 (SSTTKKSTTTTTTTTSSK) the composition is skewed to low complexity. A compositionally biased stretch (basic and acidic residues) spans 981-990 (KKVEEKKSSD). Low complexity-rich tracts occupy residues 991–1000 (FDSFFSGSDD) and 1010–1021 (KTTTTPPLTSTT). Residues 1062-1075 (PLTSNNTKNRTKSI) show a composition bias toward polar residues. A compositionally biased stretch (basic and acidic residues) spans 1091–1107 (EKNRSESPTSEKAEPTK). The segment covering 1108 to 1123 (KTSNISSLQNKLSLNP) has biased composition (polar residues). The span at 1147 to 1162 (STNNDNDSSATDLSDS) shows a compositional bias: low complexity. Composition is skewed to polar residues over residues 1163–1174 (GRSSPSVTSPTL) and 1220–1236 (KSGT…TPTQ). Phosphoserine is present on Ser1249. The span at 1277 to 1292 (EKTSSGKSSPSPTIKS) shows a compositional bias: low complexity. Over residues 1307 to 1317 (ASTTTKPTASE) the composition is skewed to polar residues. Over residues 1327 to 1358 (KKSEPETPKETPKETPKEKEQTKEKEQPKETP) the composition is skewed to basic and acidic residues. 2 stretches are compositionally biased toward low complexity: residues 1419-1445 (TSTT…AVDN) and 1452-1466 (NTTT…TPSK).

The protein belongs to the FAM21 family. In terms of assembly, probable component of the WASH complex.

This chain is WASH complex subunit 2, found in Dictyostelium discoideum (Social amoeba).